We begin with the raw amino-acid sequence, 239 residues long: MKDTLFNQSLNKRFCFDEKVAHVFDDMLERSIPYYYEMLDLGAYFIAQNLKENLNAKPLIYDLGCSTGNFFIALNRQIQQEIELVGIDNSMPMLKKAQEKLKDFNNVRFECMDFLEVEFKEASAFSLLFVLQFVRPMQREVLLKKIYNSLALNGVLLVGEKIMSEDRILDKQMIELYYLYKQNQGYSHNEIAFKREALENVLVPYSLKENIALLESVGFKHVEAVFKWVNFTLLVARKT.

Residues Tyr-35, 64–66 (GCS), 88–89 (DN), and Arg-195 each bind S-adenosyl-L-methionine.

This sequence belongs to the class I-like SAM-binding methyltransferase superfamily. Cx-SAM synthase family. As to quaternary structure, homodimer.

The enzyme catalyses prephenate + S-adenosyl-L-methionine = carboxy-S-adenosyl-L-methionine + 3-phenylpyruvate + H2O. Its function is as follows. Catalyzes the conversion of S-adenosyl-L-methionine (SAM) to carboxy-S-adenosyl-L-methionine (Cx-SAM). This Helicobacter pylori (strain HPAG1) protein is Carboxy-S-adenosyl-L-methionine synthase.